The sequence spans 479 residues: ATP synthase subunit beta (479 aa).

162 to 169 is an ATP binding site; the sequence is GGAGVGKT.

This sequence belongs to the ATPase alpha/beta chains family. In terms of assembly, F-type ATPases have 2 components, CF(1) - the catalytic core - and CF(0) - the membrane proton channel. CF(1) has five subunits: alpha(3), beta(3), gamma(1), delta(1), epsilon(1). CF(0) has three main subunits: a(1), b(2) and c(9-12). The alpha and beta chains form an alternating ring which encloses part of the gamma chain. CF(1) is attached to CF(0) by a central stalk formed by the gamma and epsilon chains, while a peripheral stalk is formed by the delta and b chains.

It is found in the cell membrane. It catalyses the reaction ATP + H2O + 4 H(+)(in) = ADP + phosphate + 5 H(+)(out). Produces ATP from ADP in the presence of a proton gradient across the membrane. The catalytic sites are hosted primarily by the beta subunits. The protein is ATP synthase subunit beta of Mesoplasma florum (strain ATCC 33453 / NBRC 100688 / NCTC 11704 / L1) (Acholeplasma florum).